Reading from the N-terminus, the 155-residue chain is uncharacterized protein (155 aa).

The transit peptide at 1–17 (MMRGASKRSISSAAVLL) directs the protein to the mitochondrion. The segment at 111–155 (WHRQQKRSQRRRSVAKYEQREEAARVEKEEREARDREMVRELFRR) is disordered. The span at 113–124 (RQQKRSQRRRSV) shows a compositional bias: basic residues. A compositionally biased stretch (basic and acidic residues) spans 125–155 (AKYEQREEAARVEKEEREARDREMVRELFRR).

The protein belongs to the prokaryotic/mitochondrial release factor family.

It localises to the mitochondrion. This is an uncharacterized protein from Saccharomyces cerevisiae (strain ATCC 204508 / S288c) (Baker's yeast).